Here is a 545-residue protein sequence, read N- to C-terminus: MTTNYIFVTGGVVSSLGKGIAAASLAAILEARGLNVTIMKLDPYINVDPGTMSPIQHGEVFVTEDGAETDLDLGHYERFIRTKMSRRNNFTTGRIYSDVLRKERRGDYLGATVQVIPHITNAIKERVLEGGEGHDVVLVEIGGTVGDIESLPFLEAIRQMAVEIGREHTLFMHLTLVPYMAASGEVKTKPTQHSVKELLSIGIQPDILICRSDRAVPANERAKIALFCNVPEKAVISLKDVDSIYKIPGLLKSQGLDDYICKRFSLNCPEANLSEWEQVIFEEANPVSEVTIGMVGKYIELPDAYKSVIEALKHGGLKNRVSVNIKLIDSQDVETRGVEILKGLDAILVPGGFGYRGVEGMITTARFARENNIPYLGICLGMQVALIDYARHVANMENANSTEFVPDCKYPVVALITEWRDENGNVEVRSEKSDLGGTMRLGAQQCQLVDDSLVRQLYNAPTIVERHRHRYEVNNMLLKQIEDAGLRVAGRSGDDQLVEIIEVPNHPWFVACQFHPEFTSTPRDGHPLFAGFVKAASEFQKRQAK.

Positions 1 to 266 (MTTNYIFVTG…DDYICKRFSL (266 aa)) are amidoligase domain. Residue S14 coordinates CTP. S14 lines the UTP pocket. ATP contacts are provided by residues 15–20 (SLGKGI) and D72. Residues D72 and E140 each contribute to the Mg(2+) site. Residues 147 to 149 (DIE), 187 to 192 (KTKPTQ), and K223 contribute to the CTP site. UTP is bound by residues 187–192 (KTKPTQ) and K223. 239 to 241 (KDV) lines the ATP pocket. The Glutamine amidotransferase type-1 domain maps to 291–542 (TIGMVGKYIE…VKAASEFQKR (252 aa)). G352 lines the L-glutamine pocket. The active-site Nucleophile; for glutamine hydrolysis is C379. L-glutamine-binding positions include 380–383 (LGMQ), E403, and R470. Catalysis depends on residues H515 and E517.

This sequence belongs to the CTP synthase family. In terms of assembly, homotetramer.

It carries out the reaction UTP + L-glutamine + ATP + H2O = CTP + L-glutamate + ADP + phosphate + 2 H(+). The catalysed reaction is L-glutamine + H2O = L-glutamate + NH4(+). The enzyme catalyses UTP + NH4(+) + ATP = CTP + ADP + phosphate + 2 H(+). It functions in the pathway pyrimidine metabolism; CTP biosynthesis via de novo pathway; CTP from UDP: step 2/2. Its activity is regulated as follows. Allosterically activated by GTP, when glutamine is the substrate; GTP has no effect on the reaction when ammonia is the substrate. The allosteric effector GTP functions by stabilizing the protein conformation that binds the tetrahedral intermediate(s) formed during glutamine hydrolysis. Inhibited by the product CTP, via allosteric rather than competitive inhibition. Its function is as follows. Catalyzes the ATP-dependent amination of UTP to CTP with either L-glutamine or ammonia as the source of nitrogen. Regulates intracellular CTP levels through interactions with the four ribonucleotide triphosphates. This chain is CTP synthase, found in Shigella boydii serotype 18 (strain CDC 3083-94 / BS512).